The primary structure comprises 248 residues: Probable transcriptional regulatory protein Psyr_1407 (248 aa).

The protein belongs to the TACO1 family.

Its subcellular location is the cytoplasm. The sequence is that of Probable transcriptional regulatory protein Psyr_1407 from Pseudomonas syringae pv. syringae (strain B728a).